Reading from the N-terminus, the 234-residue chain is uncharacterized protein (234 aa).

7 helical membrane-spanning segments follow: residues 25–45 (LMGA…TFFL), 57–77 (LFFL…QGLA), 85–105 (LPIF…TLLM), 108–128 (ATDI…LSVY), 142–162 (AFGV…FFAS), 163–183 (TGLT…LIAW), and 203–223 (WAIS…LFLL).

This sequence belongs to the BI1 family.

The protein localises to the cell membrane. This is an uncharacterized protein from Lactococcus lactis subsp. lactis (strain IL1403) (Streptococcus lactis).